The following is a 410-amino-acid chain: Cysteine desulfurase IscS (410 aa).

Pyridoxal 5'-phosphate is bound by residues 80–81 (AT), Asn160, Gln188, and 208–210 (SGH). An N6-(pyridoxal phosphate)lysine modification is found at Lys211. Thr248 contacts pyridoxal 5'-phosphate. Cys334 (cysteine persulfide intermediate) is an active-site residue. Cys334 is a [2Fe-2S] cluster binding site.

This sequence belongs to the class-V pyridoxal-phosphate-dependent aminotransferase family. NifS/IscS subfamily. In terms of assembly, homodimer. Forms a heterotetramer with IscU, interacts with other sulfur acceptors. Requires pyridoxal 5'-phosphate as cofactor.

Its subcellular location is the cytoplasm. The catalysed reaction is (sulfur carrier)-H + L-cysteine = (sulfur carrier)-SH + L-alanine. Its pathway is cofactor biosynthesis; iron-sulfur cluster biosynthesis. Functionally, master enzyme that delivers sulfur to a number of partners involved in Fe-S cluster assembly, tRNA modification or cofactor biosynthesis. Catalyzes the removal of elemental sulfur atoms from cysteine to produce alanine. Functions as a sulfur delivery protein for Fe-S cluster synthesis onto IscU, an Fe-S scaffold assembly protein, as well as other S acceptor proteins. The protein is Cysteine desulfurase IscS of Rickettsia felis (strain ATCC VR-1525 / URRWXCal2) (Rickettsia azadi).